Here is an 82-residue protein sequence, read N- to C-terminus: Sec-independent protein translocase protein TatA (82 aa).

Residues 1–21 (MGGISVWQLLIIAVIVVLLFG) form a helical membrane-spanning segment. The segment at 41–82 (KAMSEDEPAKKDDKDADFEPKSLEEQQKKEAAPESKKDKEQA) is disordered. Residues 42 to 82 (AMSEDEPAKKDDKDADFEPKSLEEQQKKEAAPESKKDKEQA) are compositionally biased toward basic and acidic residues.

Belongs to the TatA/E family. In terms of assembly, the Tat system comprises two distinct complexes: a TatABC complex, containing multiple copies of TatA, TatB and TatC subunits, and a separate TatA complex, containing only TatA subunits. Substrates initially bind to the TatABC complex, which probably triggers association of the separate TatA complex to form the active translocon.

The protein resides in the cell inner membrane. In terms of biological role, part of the twin-arginine translocation (Tat) system that transports large folded proteins containing a characteristic twin-arginine motif in their signal peptide across membranes. TatA could form the protein-conducting channel of the Tat system. The sequence is that of Sec-independent protein translocase protein TatA from Vibrio campbellii (strain ATCC BAA-1116).